We begin with the raw amino-acid sequence, 614 residues long: MTVNTTDRLAALRSLMKERSVDIYVVPSEDSHASEYITDCDARRTFISGFSGSAGTAVVTLDKAALATDGRYFNQASKQLDENWHLLKTGLQDVPTWQEWTADESAGGKTVGIDPTLISPAVAEKLNGDIKKHGGSGLKAVTENLVDLVWGESRPPRPSEPVFLLGAKYAGKGAAEKLTDLRKELEKKKAAAFVVSMLDEIAWLFNLRGNDITYNPVFFSYAIVTKDSATLYVDESKLTDEVKQYLAENGTEIKPYTDLFKDTEVLANAAKSTSESEKPTKYLVSNKASWALKLALGGEKHVDEVRSPIGDAKAIKNETELEGMRKCHIRDGAALIKYFAWLEDQLVNKKAKLNEVEAADQLEKFRSEQSDFVGLSFDTISSTGPNGAIIHYKPERGACSVIDPNAIYLCDSGAQFYDGTTDVTRTLHFGQPTAAEKKSYTLVLKGNIALDTAVFPKGTSGFALDALARQFLWKYGLDYRHGTGHGVGSFLNVHEGPIGIGTRKAYIDVPLAPGNVLSIEPGYYEDGNYGIRIENLAIVREVKTEHQFGDKPYLGFEHITMVPYCRKLIDESLLTQEEKDWLNKSNEEIRKNMAGYFDGDQLTTDWLLRETSPF.

Mn(2+) contacts are provided by D411, D422, E520, and E534.

This sequence belongs to the peptidase M24B family. Mn(2+) is required as a cofactor.

The catalysed reaction is Release of any N-terminal amino acid, including proline, that is linked to proline, even from a dipeptide or tripeptide.. Its function is as follows. Catalyzes the removal of a penultimate prolyl residue from the N-termini of peptides. The chain is Probable Xaa-Pro aminopeptidase P (AMPP) from Sordaria macrospora (strain ATCC MYA-333 / DSM 997 / K(L3346) / K-hell).